The sequence spans 150 residues: Large ribosomal subunit protein uL13 (150 aa).

The disordered stretch occupies residues 130 to 150 (EHPHGAQQPQPYQLNPSASIK). A compositionally biased stretch (polar residues) spans 136–150 (QQPQPYQLNPSASIK).

This sequence belongs to the universal ribosomal protein uL13 family. As to quaternary structure, part of the 50S ribosomal subunit.

Functionally, this protein is one of the early assembly proteins of the 50S ribosomal subunit, although it is not seen to bind rRNA by itself. It is important during the early stages of 50S assembly. The chain is Large ribosomal subunit protein uL13 from Synechococcus sp. (strain RCC307).